A 226-amino-acid polypeptide reads, in one-letter code: Transmembrane emp24 domain-containing protein 5 (226 aa).

A signal peptide spans 1–24; it reads MGDKTWLPFPVVLLAALLLPRAAG. At 25–193 the chain is on the lumenal side; the sequence is FTPSLDSDFT…IQESNFDRVN (169 aa). The region spanning 42–123 is the GOLD domain; it reads KECFYQPMPL…EKVIFFELIL (82 aa). The helical transmembrane segment at 194 to 214 threads the bilayer; that stretch reads FWSMVNLVVMVVVSAIQVYML. At 215–226 the chain is on the cytoplasmic side; sequence KSLFEDKRKSRT. The short motif at 217–218 is the Mediates export from ER element; that stretch reads LF.

This sequence belongs to the EMP24/GP25L family. In terms of assembly, interacts with TMED9 and TMED10.

It is found in the endoplasmic reticulum membrane. It localises to the golgi apparatus. Its subcellular location is the cis-Golgi network membrane. The protein resides in the endoplasmic reticulum-Golgi intermediate compartment membrane. In terms of biological role, potential role in vesicular protein trafficking, mainly in the early secretory pathway. Required for the maintenance of the Golgi apparatus; involved in protein exchange between Golgi stacks during assembly. Probably not required for COPI-vesicle-mediated retrograde transport. The polypeptide is Transmembrane emp24 domain-containing protein 5 (TMED5) (Bos taurus (Bovine)).